The sequence spans 379 residues: Homoserine O-acetyltransferase (379 aa).

Residues methionine 1 to arginine 24 form a disordered region. An AB hydrolase-1 domain is found at asparagine 60–glutamate 365. Serine 165 functions as the Nucleophile in the catalytic mechanism. A substrate-binding site is contributed by arginine 236. Residues aspartate 329 and histidine 359 contribute to the active site. Substrate is bound at residue aspartate 360.

The protein belongs to the AB hydrolase superfamily. MetX family. Homodimer.

The protein resides in the cytoplasm. The catalysed reaction is L-homoserine + acetyl-CoA = O-acetyl-L-homoserine + CoA. Its pathway is amino-acid biosynthesis; L-methionine biosynthesis via de novo pathway; O-acetyl-L-homoserine from L-homoserine: step 1/1. Transfers an acetyl group from acetyl-CoA to L-homoserine, forming acetyl-L-homoserine. In Thermobifida fusca (strain YX), this protein is Homoserine O-acetyltransferase.